The primary structure comprises 206 residues: Large ribosomal subunit protein bL25 (206 aa).

This sequence belongs to the bacterial ribosomal protein bL25 family. CTC subfamily. As to quaternary structure, part of the 50S ribosomal subunit; part of the 5S rRNA/L5/L18/L25 subcomplex. Contacts the 5S rRNA. Binds to the 5S rRNA independently of L5 and L18.

Its function is as follows. This is one of the proteins that binds to the 5S RNA in the ribosome where it forms part of the central protuberance. This chain is Large ribosomal subunit protein bL25, found in Bartonella henselae (strain ATCC 49882 / DSM 28221 / CCUG 30454 / Houston 1) (Rochalimaea henselae).